Here is a 98-residue protein sequence, read N- to C-terminus: Feather keratin (98 aa).

Residue alanine 1 is modified to N-acetylalanine.

This sequence belongs to the avian keratin family. As to quaternary structure, the avian keratins (F-ker, S-ker, C-ker and B-ker) are a complex mixture of very similar polypeptides.

The polypeptide is Feather keratin (Chroicocephalus novaehollandiae (Silver gull)).